Consider the following 2194-residue polypeptide: PDZ and LIM domain protein Zasp (2194 aa).

The PDZ domain occupies glutamine 8–glycine 90. The disordered stretch occupies residues threonine 211–threonine 277. Residues proline 228–glutamine 253 show a composition bias toward low complexity. The region spanning asparagine 280–asparagine 339 is the LIM zinc-binding 1 domain. Residues alanine 415–aspartate 435 show a composition bias toward low complexity. Disordered regions lie at residues alanine 415–asparagine 436, valine 457–phenylalanine 476, glycine 511–glutamate 558, serine 580–proline 611, valine 623–glutamate 692, alanine 896–serine 940, leucine 1223–glutamine 1260, glutamine 1297–asparagine 1322, leucine 1550–glutamate 1632, glutamine 1646–threonine 1738, and alanine 1815–glutamine 1837. Residues proline 515 to proline 530 are compositionally biased toward low complexity. Polar residues-rich tracts occupy residues serine 580–threonine 590 and valine 644–alanine 667. The segment covering serine 676 to glutamate 692 has biased composition (low complexity). Over residues glutamine 1598–glycine 1610 the composition is skewed to polar residues. Low complexity-rich tracts occupy residues serine 1616–glutamine 1630, glutamine 1646–glutamine 1668, and serine 1699–serine 1727. LIM zinc-binding domains lie at proline 2018–alanine 2078, proline 2079–threonine 2138, and lysine 2139–arginine 2194.

In terms of assembly, interacts with alpha-actinin (Actn). In terms of tissue distribution, expression is first detected in the proctodeum and the midgut primordium. In stage 11 embryos, expression is predominant in the leading edge of epidermal cells adjacent to the amnioserosa. Stage 12 embryos exhibit expression in the midgut and the leading edge. Expressed in several rows of germ band cells next to the leading edge at stage 14. Strong expression is visible in the midgut and pharyngeal muscles of stage 17 embryos. Also expressed in somatic muscles and visceral mesoderm. Colocalizes with mys (beta PS integrin) in myotendinous junctions and with Actn in muscle Z lines.

It localises to the cytoplasm. The protein localises to the cytoskeleton. Regulator of cell matrix adhesion having two related functions, one upstream of Actn organizing the Z line and the other downstream of integrins regulating assembly of integrin adhesion sites. Also required for the formation of myotendinous junctions in muscles. This chain is PDZ and LIM domain protein Zasp (Zasp52), found in Drosophila melanogaster (Fruit fly).